Consider the following 141-residue polypeptide: MLTADDKKLISQIWTKVAEHGGEFGGEALERMFITYPQTKTYFPHFDLHVGSEQVRGHGKKVVNALSNAVKNLDNLSQALAELSNLHAYNLRVDPVNFKLLSQCFQVVLAVHLGKEYTPEVHAAYDKFLSAVASVLAEKYR.

Positions 1 to 141 (MLTADDKKLI…VASVLAEKYR (141 aa)) constitute a Globin domain. His58 and His87 together coordinate heme b.

The protein belongs to the globin family. As to quaternary structure, heterotetramer of two alpha-D chains and two beta chains. Red blood cells.

In terms of biological role, involved in oxygen transport from the lung to the various peripheral tissues. The chain is Hemoglobin subunit alpha-D (HBAD) from Rhea americana (Greater rhea).